The sequence spans 101 residues: Small ribosomal subunit protein uS14 (101 aa).

Belongs to the universal ribosomal protein uS14 family. In terms of assembly, part of the 30S ribosomal subunit. Contacts proteins S3 and S10.

In terms of biological role, binds 16S rRNA, required for the assembly of 30S particles and may also be responsible for determining the conformation of the 16S rRNA at the A site. This Vesicomyosocius okutanii subsp. Calyptogena okutanii (strain HA) protein is Small ribosomal subunit protein uS14.